The primary structure comprises 326 residues: DNA-directed RNA polymerase subunit alpha (326 aa).

The alpha N-terminal domain (alpha-NTD) stretch occupies residues 1-232; sequence MQSATEFLKP…SQLSVFADLE (232 aa). The interval 246–326 is alpha C-terminal domain (alpha-CTD); the sequence is VDPLLLRPVD…NWPPAGLERP (81 aa).

It belongs to the RNA polymerase alpha chain family. As to quaternary structure, homodimer. The RNAP catalytic core consists of 2 alpha, 1 beta, 1 beta' and 1 omega subunit. When a sigma factor is associated with the core the holoenzyme is formed, which can initiate transcription.

It catalyses the reaction RNA(n) + a ribonucleoside 5'-triphosphate = RNA(n+1) + diphosphate. Functionally, DNA-dependent RNA polymerase catalyzes the transcription of DNA into RNA using the four ribonucleoside triphosphates as substrates. This Thiobacillus denitrificans (strain ATCC 25259 / T1) protein is DNA-directed RNA polymerase subunit alpha.